A 459-amino-acid chain; its full sequence is MAATTMKASFPLLMLMGISFLASVCVSSRSDPQNPFIFKSNKFQTLFENENGHIRLLQKFDQRSKIFENLQNYRLLEYKSKPHTIFLPQHTDADYILVVLSGKAILTVLKPDDRNSFNLERGDTIKLPAGTIAYLVNRDDNEELRVLDLAIPVNRPGQLQSFLLSGNQNQQNYLSGFSKNILEASFNTDYEEIEKVLLEEHEKETQHRRSLKDKRQQSQEENVIVKLSRGQIEELSKNAKSTSKKSVSSESEPFNLRSRGPIYSNEFGKFFEITPEKNPQLQDLDIFVNSVEIKEGSLLLPHYNSRAIVIVTVNEGKGDFELVGQRNENQQEQRKEDDEEEEQGEEEINKQVQNYKAKLSSGDVFVIPAGHPVAVKASSNLDLLGFGINAENNQRNFLAGDEDNVISQIQRPVKELAFPGSAQEVDRILENQKQSHFADAQPQQRERGSRETRDRLSSV.

The signal sequence occupies residues Met1–Ser28. The region spanning Phe36–Glu194 is the Cupin type-1 1 domain. Disordered regions lie at residues Leu235–Ser258, Glu321–Glu346, and Glu430–Val459. Residues Asn238–Ser251 show a composition bias toward low complexity. One can recognise a Cupin type-1 2 domain in the interval Phe254–Asp426. The span at Asp337–Glu346 shows a compositional bias: acidic residues. Positions Gln444–Val459 are enriched in basic and acidic residues.

This sequence belongs to the 7S seed storage protein family.

It localises to the vacuole. It is found in the aleurone grain. Functionally, seed storage protein. In Pisum sativum (Garden pea), this protein is Vicilin.